Reading from the N-terminus, the 470-residue chain is Crh-like protein UTR2 (470 aa).

Positions 1-23 (MRFSTLHFAFLATLSSIFTVVAA) are cleaved as a signal peptide. A disulfide bridge connects residues Cys-58 and Cys-69. 3 N-linked (GlcNAc...) asparagine glycosylation sites follow: Asn-65, Asn-100, and Asn-125. The GH16 domain maps to 95–282 (SDYLGNSTEA…WAGGLINWDS (188 aa)). Glu-168 acts as the Nucleophile in catalysis. The active-site Proton donor is the Glu-172. Glu-172 provides a ligand contact to chitin. N-linked (GlcNAc...) asparagine glycosylation is found at Asn-177, Asn-194, Asn-198, Asn-202, Asn-235, and Asn-239. Positions 259 and 270 each coordinate chitin. N-linked (GlcNAc...) asparagine glycosylation is found at Asn-314 and Asn-327. The tract at residues 347 to 446 (SDDATGFDPQ…SSGSSSQGVA (100 aa)) is disordered. Composition is skewed to low complexity over residues 370-384 (TTIT…ITSV) and 392-408 (TANV…QATA). The span at 409 to 418 (KSSTGTNTYD) shows a compositional bias: polar residues. Positions 433-446 (TDSGSSGSSSQGVA) are enriched in low complexity. Residue Ser-440 is the site of GPI-anchor amidated serine attachment. The propeptide at 441 to 470 (SSQGVANSLNESVISGIFASICLGILSFFM) is removed in mature form. An N-linked (GlcNAc...) asparagine glycan is attached at Asn-450.

It belongs to the glycosyl hydrolase 16 family. CRH1 subfamily. In terms of processing, the GPI-anchor is attached to the protein in the endoplasmic reticulum and serves to target the protein to the cell surface. There, the glucosamine-inositol phospholipid moiety is cleaved off and the GPI-modified mannoprotein is covalently attached via its lipidless GPI glycan remnant to the 1,6-beta-glucan of the outer cell wall layer.

It is found in the secreted. It localises to the cell wall. The protein localises to the membrane. It carries out the reaction Random endo-hydrolysis of N-acetyl-beta-D-glucosaminide (1-&gt;4)-beta-linkages in chitin and chitodextrins.. In terms of biological role, dual chitinase/transglycosylase that plays a role in cell wall architecture. Chitinase and transglycosylase activities are coupled. Required for the polysaccharide cross-linking at the septa and the cell wall. More specifically, transfers chitin to 1,6-beta-glucan in the cell wall. Plays an important role in fungal pathogenesis via its functions in cell wall assembly and regeneration, filamentation, and adherence to host cells. Acts as a cell surface antigen in acute candidemia patients. This chain is Crh-like protein UTR2, found in Candida albicans (strain SC5314 / ATCC MYA-2876) (Yeast).